A 3140-amino-acid chain; its full sequence is Genome polyprotein (3140 aa).

Residues arginine 165–tyrosine 308 form the Peptidase S30 domain. Residues histidine 216, aspartate 225, and serine 259 each act as for P1 proteinase activity in the active site. The short motif at lysine 360 to cysteine 363 is the Involved in interaction with stylet and aphid transmission element. Positions proline 618 to lysine 620 match the Involved in virions binding and aphid transmission motif. The region spanning methionine 644–glycine 766 is the Peptidase C6 domain. Active-site for helper component proteinase activity residues include cysteine 652 and histidine 725. Residues glutamate 1240 to glutamate 1392 form the Helicase ATP-binding domain. Residue glycine 1253–serine 1260 participates in ATP binding. The short motif at aspartate 1342–histidine 1345 is the DECH box element. A Helicase C-terminal domain is found at aspartate 1411–serine 1570. The short motif at lysine 1897–lysine 1904 is the Nuclear localization signal element. An O-(5'-phospho-RNA)-tyrosine modification is found at tyrosine 1919. In terms of domain architecture, Peptidase C4 spans serine 2050–arginine 2268. Residues histidine 2095, aspartate 2130, and cysteine 2200 each act as for nuclear inclusion protein A activity in the active site. A RdRp catalytic domain is found at tryptophan 2534–tyrosine 2658. Positions glycine 2883 to arginine 2905 are disordered. A compositionally biased stretch (polar residues) spans alanine 2890–asparagine 2900. 3 positions are modified to phosphoserine: serine 2891, serine 2911, and serine 2928. Phosphothreonine occurs at positions 3064 and 3123.

This sequence belongs to the potyviridae genome polyprotein family. In terms of assembly, interacts with host eIF4E protein (via cap-binding region); this interaction mediates the translation of the VPg-viral RNA conjugates. Part of a complex that comprises VPg, RNA, host EIF4E and EIF4G; this interaction mediates the translation of the VPg-viral RNA conjugates. VPg is uridylylated by the polymerase and is covalently attached to the 5'-end of the genomic RNA. This uridylylated form acts as a nucleotide-peptide primer for the polymerase. Post-translationally, potyviral RNA is expressed as two polyproteins which undergo post-translational proteolytic processing. Genome polyprotein is processed by NIa-pro, P1 and HC-pro proteinases resulting in the production of at least ten individual proteins. P3N-PIPO polyprotein is cleaved by P1 and HC-pro proteinases resulting in the production of three individual proteins. The P1 proteinase and the HC-pro cleave only their respective C-termini autocatalytically. 6K1 is essential for proper proteolytic separation of P3 from CI.

The protein resides in the host cytoplasmic vesicle. The protein localises to the host nucleus. It is found in the virion. The enzyme catalyses RNA(n) + a ribonucleoside 5'-triphosphate = RNA(n+1) + diphosphate. The catalysed reaction is Hydrolyzes glutaminyl bonds, and activity is further restricted by preferences for the amino acids in P6 - P1' that vary with the species of potyvirus, e.g. Glu-Xaa-Xaa-Tyr-Xaa-Gln-|-(Ser or Gly) for the enzyme from tobacco etch virus. The natural substrate is the viral polyprotein, but other proteins and oligopeptides containing the appropriate consensus sequence are also cleaved.. It carries out the reaction Hydrolyzes a Gly-|-Gly bond at its own C-terminus, commonly in the sequence -Tyr-Xaa-Val-Gly-|-Gly, in the processing of the potyviral polyprotein.. Required for aphid transmission and also has proteolytic activity. Only cleaves a Gly-Gly dipeptide at its own C-terminus. Interacts with virions and aphid stylets. Acts as a suppressor of RNA-mediated gene silencing, also known as post-transcriptional gene silencing (PTGS), a mechanism of plant viral defense that limits the accumulation of viral RNAs. May have RNA-binding activity. In terms of biological role, has helicase activity. It may be involved in replication. Its function is as follows. Indispensable for virus replication. Reduces the abundance of host transcripts related to jasmonic acid biosynthesis therefore altering the host defenses. In order to increase its own stability, decreases host protein degradation pathways. Functionally, indispensable for virus replication. Mediates the cap-independent, EIF4E-dependent translation of viral genomic RNAs. Binds to the cap-binding site of host EIF4E and thus interferes with the host EIF4E-dependent mRNA export and translation. VPg-RNA directly binds EIF4E and is a template for transcription. Also forms trimeric complexes with EIF4E-EIF4G, which are templates for translation. In terms of biological role, has RNA-binding and proteolytic activities. Its function is as follows. An RNA-dependent RNA polymerase that plays an essential role in the virus replication. Functionally, involved in aphid transmission, cell-to-cell and systemis movement, encapsidation of the viral RNA and in the regulation of viral RNA amplification. This chain is Genome polyprotein, found in Prunus armeniaca (Apricot).